A 635-amino-acid chain; its full sequence is Endo-1,4-beta-xylanase B (635 aa).

A GH10 domain is found at 1–337 (MNLKTAYEPY…KEAYYAVLKA (337 aa)). Glu150 functions as the Proton donor in the catalytic mechanism. Residue Glu255 is the Nucleophile of the active site.

The protein belongs to the glycosyl hydrolase 10 (cellulase F) family.

It carries out the reaction Endohydrolysis of (1-&gt;4)-beta-D-xylosidic linkages in xylans.. It functions in the pathway glycan degradation; xylan degradation. Its function is as follows. B.fibrisolvens is located in the rumen of ruminant animals, where it contributes to the animal's digestion of plant material by hydrolyzing hemicellulose with its xylanases. This is Endo-1,4-beta-xylanase B (xynB) from Butyrivibrio fibrisolvens.